Consider the following 231-residue polypeptide: Type 3 secretion system stator protein (231 aa).

The core secretion machinery of the T3SS is composed of approximately 20 different proteins, including cytoplasmic components, a base, an export apparatus and a needle. This subunit is part of the cytosolic complex. Interacts directly with Spa47/SctN (T3SS ATPase) and Spa33/SctQ (the major sorting platform component). Homodimer in solution.

Its subcellular location is the cytoplasm. In terms of biological role, component of the type III secretion system (T3SS), also called injectisome, which is used to inject bacterial effector proteins into eukaryotic host cells. Acts as a regulator of the Spa47/SctN ATPase activity. It down-regulates the ATPase activity of the oligomeric Spa47/SctN, while it up-regulates the activity of the monomeric form. Important for translocation of MxiH/SctF, the major needle component. The chain is Type 3 secretion system stator protein from Shigella flexneri.